Reading from the N-terminus, the 663-residue chain is Methionine--tRNA ligase (663 aa).

The 'HIGH' region motif lies at Ala10–His20. Residues Cys142, Cys145, Cys154, and Cys157 each coordinate Zn(2+). Residues Lys323–Ser327 carry the 'KMSKS' region motif. Thr326 serves as a coordination point for ATP. Positions Tyr563–His663 constitute a tRNA-binding domain.

Belongs to the class-I aminoacyl-tRNA synthetase family. MetG type 1 subfamily. Homodimer. Requires Zn(2+) as cofactor.

It localises to the cytoplasm. It carries out the reaction tRNA(Met) + L-methionine + ATP = L-methionyl-tRNA(Met) + AMP + diphosphate. Is required not only for elongation of protein synthesis but also for the initiation of all mRNA translation through initiator tRNA(fMet) aminoacylation. The sequence is that of Methionine--tRNA ligase from Methanococcus vannielii (strain ATCC 35089 / DSM 1224 / JCM 13029 / OCM 148 / SB).